The chain runs to 537 residues: Tyrosine-protein kinase Fyn (537 aa).

Glycine 2 carries N-myristoyl glycine lipidation. Residues cysteine 3 and cysteine 6 are each lipidated (S-palmitoyl cysteine). Positions 14 to 35 (LTEERDGSLNQSSGYRYGTDPT) are disordered. Residues serine 21 and serine 26 each carry the phosphoserine modification. The region spanning 82–143 (TGVTLFVALY…PSNYVAPVDS (62 aa)) is the SH3 domain. Residues 149–246 (WYFGKLGRKD…GLCCRLVVPC (98 aa)) form the SH2 domain. Phosphotyrosine is present on tyrosine 185. Residues 271 to 524 (LQLIKRLGNG…YLQGFLEDYF (254 aa)) enclose the Protein kinase domain. Residues 277–285 (LGNGQFGEV) and lysine 299 contribute to the ATP site. Aspartate 390 serves as the catalytic Proton acceptor. Residue tyrosine 420 is modified to Phosphotyrosine; by autocatalysis. Phosphotyrosine is present on tyrosine 531.

This sequence belongs to the protein kinase superfamily. Tyr protein kinase family. SRC subfamily. Interacts (via its SH3 domain) with PIK3R1 and PRMT8. Interacts with FYB1, PAG1, and SH2D1A. Interacts with CD79A (tyrosine-phosphorylated form); the interaction increases FYN activity. Interacts (via SH2 domain) with CSF1R (tyrosine phosphorylated). Interacts with TOM1L1 (phosphorylated form). Interacts with KDR (tyrosine phosphorylated). Interacts (via SH3 domain) with KLHL2 (via N-terminus). Interacts with SH2D1A and SLAMF1. Interacts with ITCH; the interaction phosphorylates ITCH and negatively regulates its activity. Interacts with FASLG. Interacts with RUNX3. Interacts with KIT. Interacts with EPHA8; possible downstream effector of EPHA8 in regulation of cell adhesion. Interacts with PTK2/FAK1; this interaction leads to PTK2/FAK1 phosphorylation and activation. Interacts with CAV1; this interaction couples integrins to the Ras-ERK pathway. Interacts with UNC119. Interacts (via SH2 domain) with PTPRH (phosphorylated form). Interacts with PTPRO (phosphorylated form). Interacts with PTPRB (phosphorylated form). Interacts with FYB2. Interacts with DSCAM. Interacts with SKAP1 and FYB1; this interaction promotes the phosphorylation of CLNK. Interacts with NEDD9; in the presence of PTK2. Requires Mn(2+) as cofactor. Post-translationally, autophosphorylated at Tyr-420. Phosphorylation on the C-terminal tail at Tyr-531 by CSK maintains the enzyme in an inactive state. PTPRC/CD45 dephosphorylates Tyr-531 leading to activation. Dephosphorylation at Tyr-420 by PTPN2 negatively regulates T-cell receptor signaling. Phosphorylated at tyrosine residues, which can be enhanced by NTN1. In terms of processing, palmitoylated. Palmitoylation at Cys-3 and Cys-6, probably by ZDHHC21, regulates subcellular location. In terms of tissue distribution, detected in spinal cord oligodendrocytes (at protein level).

Its subcellular location is the cytoplasm. The protein resides in the nucleus. It localises to the cell membrane. It is found in the perikaryon. It carries out the reaction L-tyrosyl-[protein] + ATP = O-phospho-L-tyrosyl-[protein] + ADP + H(+). Inhibited by phosphorylation of Tyr-531 by leukocyte common antigen and activated by dephosphorylation of this site. In terms of biological role, non-receptor tyrosine-protein kinase that plays a role in many biological processes including regulation of cell growth and survival, cell adhesion, integrin-mediated signaling, cytoskeletal remodeling, cell motility, immune response and axon guidance. Inactive FYN is phosphorylated on its C-terminal tail within the catalytic domain. Following activation by PKA, the protein subsequently associates with PTK2/FAK1, allowing PTK2/FAK1 phosphorylation, activation and targeting to focal adhesions. Involved in the regulation of cell adhesion and motility through phosphorylation of CTNNB1 (beta-catenin) and CTNND1 (delta-catenin). Regulates cytoskeletal remodeling by phosphorylating several proteins including the actin regulator WAS and the microtubule-associated proteins MAP2 and MAPT. Promotes cell survival by phosphorylating AGAP2/PIKE-A and preventing its apoptotic cleavage. Participates in signal transduction pathways that regulate the integrity of the glomerular slit diaphragm (an essential part of the glomerular filter of the kidney) by phosphorylating several slit diaphragm components including NPHS1, KIRREL1 and TRPC6. Plays a role in neural processes by phosphorylating DPYSL2, a multifunctional adapter protein within the central nervous system, ARHGAP32, a regulator for Rho family GTPases implicated in various neural functions, and SNCA, a small pre-synaptic protein. Involved in reelin signaling by mediating phosphorylation of DAB1 following reelin (RELN)-binding to its receptor. Participates in the downstream signaling pathways that lead to T-cell differentiation and proliferation following T-cell receptor (TCR) stimulation. Phosphorylates PTK2B/PYK2 in response to T-cell receptor activation. Also participates in negative feedback regulation of TCR signaling through phosphorylation of PAG1, thereby promoting interaction between PAG1 and CSK and recruitment of CSK to lipid rafts. CSK maintains LCK and FYN in an inactive form. Promotes CD28-induced phosphorylation of VAV1. In mast cells, phosphorylates CLNK after activation of immunoglobulin epsilon receptor signaling. Can also promote CD244-mediated NK cell activation. In Rattus norvegicus (Rat), this protein is Tyrosine-protein kinase Fyn.